The sequence spans 267 residues: 4-hydroxy-tetrahydrodipicolinate reductase (267 aa).

10–15 (GCLGKQ) serves as a coordination point for NAD(+). Arg37 lines the NADP(+) pocket. NAD(+) is bound by residues 99 to 101 (GTT) and 122 to 125 (TTNV). His154 serves as the catalytic Proton donor/acceptor. Residue His155 coordinates (S)-2,3,4,5-tetrahydrodipicolinate. Lys158 acts as the Proton donor in catalysis. 164–165 (GT) contributes to the (S)-2,3,4,5-tetrahydrodipicolinate binding site.

Belongs to the DapB family.

It is found in the cytoplasm. The enzyme catalyses (S)-2,3,4,5-tetrahydrodipicolinate + NAD(+) + H2O = (2S,4S)-4-hydroxy-2,3,4,5-tetrahydrodipicolinate + NADH + H(+). It catalyses the reaction (S)-2,3,4,5-tetrahydrodipicolinate + NADP(+) + H2O = (2S,4S)-4-hydroxy-2,3,4,5-tetrahydrodipicolinate + NADPH + H(+). The protein operates within amino-acid biosynthesis; L-lysine biosynthesis via DAP pathway; (S)-tetrahydrodipicolinate from L-aspartate: step 4/4. Catalyzes the conversion of 4-hydroxy-tetrahydrodipicolinate (HTPA) to tetrahydrodipicolinate. The protein is 4-hydroxy-tetrahydrodipicolinate reductase of Ehrlichia canis (strain Jake).